Here is a 113-residue protein sequence, read N- to C-terminus: UPF0122 protein Lreu_1156 (113 aa).

It belongs to the UPF0122 family.

Its function is as follows. Might take part in the signal recognition particle (SRP) pathway. This is inferred from the conservation of its genetic proximity to ftsY/ffh. May be a regulatory protein. The chain is UPF0122 protein Lreu_1156 from Limosilactobacillus reuteri (strain DSM 20016) (Lactobacillus reuteri).